Reading from the N-terminus, the 379-residue chain is Flagellin A (379 aa).

2 coiled-coil regions span residues 103–128 (TNSA…RIAE) and 302–341 (YVDS…IKDT).

The protein belongs to the bacterial flagellin family. As to quaternary structure, heteromer of multiple flagellin subunits including FlaA, FlaB, FlaC, FlaD and possibly FlaE.

It localises to the secreted. The protein localises to the bacterial flagellum. In terms of biological role, flagellin is the subunit protein which polymerizes to form the filaments of bacterial flagella. FlaA is essential for flagellar synthesis and full motility. Important for virulence at two different levels: is needed for crossing the fish integument and may play a role once the bacterium has entered the host. The polypeptide is Flagellin A (flaA) (Vibrio anguillarum (Listonella anguillarum)).